Consider the following 426-residue polypeptide: Protein CgeD (426 aa).

To B.subtilis spore coat polysaccharide biosynthesis protein SpsA.

May be involved in maturation of the outermost layer of the spore. The polypeptide is Protein CgeD (cgeD) (Bacillus subtilis (strain 168)).